A 328-amino-acid polypeptide reads, in one-letter code: GMP reductase (328 aa).

The Thioimidate intermediate role is filled by C176. An NADP(+)-binding site is contributed by 205-228 (IIADGGIRTHGDIAKSVRFGATMV).

This sequence belongs to the IMPDH/GMPR family. GuaC type 2 subfamily.

The catalysed reaction is IMP + NH4(+) + NADP(+) = GMP + NADPH + 2 H(+). Catalyzes the irreversible NADPH-dependent deamination of GMP to IMP. It functions in the conversion of nucleobase, nucleoside and nucleotide derivatives of G to A nucleotides, and in maintaining the intracellular balance of A and G nucleotides. The polypeptide is GMP reductase (Shouchella clausii (strain KSM-K16) (Alkalihalobacillus clausii)).